We begin with the raw amino-acid sequence, 156 residues long: Ribosomal RNA large subunit methyltransferase H (156 aa).

S-adenosyl-L-methionine-binding positions include leucine 73, glycine 104, and 123–128; that span reads LSPLTL.

It belongs to the RNA methyltransferase RlmH family. As to quaternary structure, homodimer.

It is found in the cytoplasm. The enzyme catalyses pseudouridine(1915) in 23S rRNA + S-adenosyl-L-methionine = N(3)-methylpseudouridine(1915) in 23S rRNA + S-adenosyl-L-homocysteine + H(+). In terms of biological role, specifically methylates the pseudouridine at position 1915 (m3Psi1915) in 23S rRNA. The sequence is that of Ribosomal RNA large subunit methyltransferase H from Sodalis glossinidius (strain morsitans).